Reading from the N-terminus, the 69-residue chain is Cold shock-like protein CspC (69 aa).

Residues 6-66 (GQVKWFNESK…GQKGPAAVNV (61 aa)) enclose the CSD domain.

Its subcellular location is the cytoplasm. The sequence is that of Cold shock-like protein CspC (cspC) from Escherichia coli O157:H7.